A 592-amino-acid polypeptide reads, in one-letter code: N-acetyltransferase ESCO2 (592 aa).

Phosphoserine occurs at positions 41 and 85. Residues 267–294 form a disordered region; that stretch reads KSSVKVQNARSKNEEKLRKNPSGAVVSS. Ser309 is subject to Phosphoserine. A CCHH-type zinc finger spans residues 384–408; it reads TVCKSCGMIYTASNPEDEIQHLQHH.

This sequence belongs to the acetyltransferase family. ECO subfamily.

The protein resides in the nucleus. Its subcellular location is the chromosome. The enzyme catalyses L-lysyl-[protein] + acetyl-CoA = N(6)-acetyl-L-lysyl-[protein] + CoA + H(+). In terms of biological role, acetyltransferase required for the establishment of sister chromatid cohesion. Couples the processes of cohesion and DNA replication to ensure that only sister chromatids become paired together. In contrast to the structural cohesins, the deposition and establishment factors are required only during the S phase. Acetylates the cohesin component SMC3. The protein is N-acetyltransferase ESCO2 (Esco2) of Mus musculus (Mouse).